We begin with the raw amino-acid sequence, 378 residues long: Deoxyguanosinetriphosphate triphosphohydrolase-like protein (378 aa).

The tract at residues 1 to 28 (MLAPYACQPGESRGRQQPESMSTFRSPF) is disordered. The segment covering 15-26 (RQQPESMSTFRS) has biased composition (polar residues). The HD domain occupies 62–198 (RLTHSIEVAQ…AAIADDVAYS (137 aa)).

The protein belongs to the dGTPase family. Type 2 subfamily.

This Cereibacter sphaeroides (strain ATCC 17025 / ATH 2.4.3) (Rhodobacter sphaeroides) protein is Deoxyguanosinetriphosphate triphosphohydrolase-like protein.